The following is a 197-amino-acid chain: Imidazoleglycerol-phosphate dehydratase (197 aa).

The protein belongs to the imidazoleglycerol-phosphate dehydratase family.

The protein resides in the cytoplasm. It catalyses the reaction D-erythro-1-(imidazol-4-yl)glycerol 3-phosphate = 3-(imidazol-4-yl)-2-oxopropyl phosphate + H2O. It participates in amino-acid biosynthesis; L-histidine biosynthesis; L-histidine from 5-phospho-alpha-D-ribose 1-diphosphate: step 6/9. This is Imidazoleglycerol-phosphate dehydratase from Stutzerimonas stutzeri (strain A1501) (Pseudomonas stutzeri).